The sequence spans 317 residues: (R)-citramalyl-CoA lyase (317 aa).

One can recognise a Pyruvate carboxyltransferase domain in the interval 4 to 281 (VTIVDVAPRD…PTGIDLSALI (278 aa)). Arg12 contacts substrate. A divalent metal cation is bound by residues Asp13, His214, and His216. The active site involves Cys247. Position 256 (Asn256) interacts with a divalent metal cation.

It belongs to the HMG-CoA lyase family. Homodimer. The cofactor is Mn(2+). Co(2+) serves as cofactor. Ni(2+) is required as a cofactor. It depends on Mg(2+) as a cofactor.

It carries out the reaction (3R)-citramalyl-CoA = pyruvate + acetyl-CoA. Its activity is regulated as follows. Activated by dithioerythritol (DTE) (in vitro). Functionally, involved in the glyoxylate assimilation cycle used to regenerate acetyl-CoA and produce pyruvate as universal precursor for biosynthesis. Catalyzes the cleavage of (R)-citramalyl-CoA to yield acetyl-CoA and pyruvate. This is (R)-citramalyl-CoA lyase (ccl) from Chloroflexus aurantiacus (strain ATCC 29366 / DSM 635 / J-10-fl).